The chain runs to 956 residues: DNA replication helicase (956 aa).

Position 120-127 (120-127 (GTAGAGKT)) interacts with ATP. A disordered region spans residues 658-694 (PINNHVDADSSQGGQSVPVSQRMEHGQEETHDIPCLS). A compositionally biased stretch (low complexity) spans 667–678 (SSQGGQSVPVSQ). Basic and acidic residues predominate over residues 679 to 694 (RMEHGQEETHDIPCLS).

This sequence belongs to the herpesviridae helicase family. Associates with the primase and the primase-associated factor to form the helicase-primase complex.

The protein localises to the host nucleus. Component of the helicase/primase complex. Unwinds the DNA at the replication forks and generates single-stranded DNA for both leading and lagging strand synthesis. The primase synthesizes short RNA primers on the lagging strand that the polymerase elongates using dNTPs. Possesses helicase-like motifs and therefore may act as the helicase subunit of the complex. The sequence is that of DNA replication helicase from Human cytomegalovirus (strain AD169) (HHV-5).